The following is a 467-amino-acid chain: MSPKTLYDKIWDAHVAQEAEDGTCLLYIDRHLVHEVTSPQAFEGLRMAGRKVHAPEKTIAVPDHNVPTTAGRENPDQMPEDSRIQVAALDTNAREFGVHYYPVTDIRQGIVHIVGPEQGWTLPGMTVVCGDSHTATHGAFGALAHGIGTSEVEHVLATQTLIQKKSKNMKVEITGKLSPGVTAKDIVLTIIGETGTGGGTGYVIEYCGEAIRDLSMEGRMTICNMAIEGGARAGLIAPDETTFEYVKGRPHAPKGAQWEAAVNWWKTLYSDDDAHWDKIVTIRGEDIAPTVTWGTSPEDALPITATVPAPEDFTGGKVEAARRALDYMGLTPGMKLSDIEIDTVFIGSCTNGRIEDLRAAADVVKGKKIKDGMRAMVVPGSGLVRAQAEEEGLAEIFKDAGFEWRLAGCSMCLAMNPDQLSEGERCASTSNRNFEGRQGFKGRTHLVSPAMAAAAAVTGKLTDVREL.

Cysteine 349, cysteine 409, and cysteine 412 together coordinate [4Fe-4S] cluster.

It belongs to the aconitase/IPM isomerase family. LeuC type 1 subfamily. In terms of assembly, heterodimer of LeuC and LeuD. It depends on [4Fe-4S] cluster as a cofactor.

The enzyme catalyses (2R,3S)-3-isopropylmalate = (2S)-2-isopropylmalate. The protein operates within amino-acid biosynthesis; L-leucine biosynthesis; L-leucine from 3-methyl-2-oxobutanoate: step 2/4. Its function is as follows. Catalyzes the isomerization between 2-isopropylmalate and 3-isopropylmalate, via the formation of 2-isopropylmaleate. This chain is 3-isopropylmalate dehydratase large subunit, found in Ruegeria sp. (strain TM1040) (Silicibacter sp.).